Reading from the N-terminus, the 279-residue chain is Protease HtpX homolog (279 aa).

The next 2 membrane-spanning stretches (helical) occupy residues 6–26 (TVAL…MMGG) and 28–48 (GGAL…YWFS). His-127 is a binding site for Zn(2+). Residue Glu-128 is part of the active site. His-131 contributes to the Zn(2+) binding site. The next 2 membrane-spanning stretches (helical) occupy residues 137-157 (ILIG…AHMA) and 177-197 (LGLL…QMAI). Zn(2+) is bound at residue Glu-202.

The protein belongs to the peptidase M48B family. It depends on Zn(2+) as a cofactor.

The protein localises to the cell inner membrane. In Syntrophotalea carbinolica (strain DSM 2380 / NBRC 103641 / GraBd1) (Pelobacter carbinolicus), this protein is Protease HtpX homolog.